The following is a 161-amino-acid chain: M-phase phosphoprotein 6 (161 aa).

Glycyl lysine isopeptide (Lys-Gly) (interchain with G-Cter in SUMO2) cross-links involve residues Lys-37 and Lys-86. A Phosphoserine modification is found at Ser-111. The short motif at 117–134 (RRYETLVGTIGKKFVKKR) is the Nuclear localization signal element. Residues Lys-128, Lys-151, and Lys-154 each participate in a glycyl lysine isopeptide (Lys-Gly) (interchain with G-Cter in SUMO2) cross-link.

The protein belongs to the MPP6 family. Associates with the RNA exosome complex, mediated by EXOSC3. Interacts with ARHGAP18. Interacts with exosome cofactors EXOSC10 and MTREX. Post-translationally, phosphorylated in M (mitotic) phase.

It localises to the nucleus. It is found in the nucleolus. Its subcellular location is the cytoplasm. Functionally, RNA-binding protein that associates with the RNA exosome complex. Involved in the 3'-processing of the 7S pre-RNA to the mature 5.8S rRNA and plays a role in recruiting the RNA exosome complex to pre-rRNA; this function may include C1D. The sequence is that of M-phase phosphoprotein 6 from Mus musculus (Mouse).